Here is a 207-residue protein sequence, read N- to C-terminus: Casparian strip membrane protein 1 (207 aa).

Over residues 1 to 12 the composition is skewed to polar residues; sequence MEADSTTINVTE. The tract at residues 1 to 20 is disordered; the sequence is MEADSTTINVTETPKERKGK. Residues 1–48 lie on the Cytoplasmic side of the membrane; it reads MEADSTTINVTETPKERKGKAPLLAAPPASSGVKRVLQKAPKGGYKRG. A helical membrane pass occupies residues 49–69; that stretch reads LAVFDVVLRLAGIATALGAAI. Topologically, residues 70 to 98 are extracellular; it reads AMGSTDQTLPFFTQFFQFKAEFDDLPAFT. The helical transmembrane segment at 99-119 threads the bilayer; it reads FFVIANAITAAYLALTIPISI. Residues 120-131 are Cytoplasmic-facing; it reads VCIIRPHLVAPR. A helical transmembrane segment spans residues 132–152; that stretch reads VLLIFLDTVMVALTTAAAGGT. The Extracellular segment spans residues 153 to 184; sequence ASIVYLAHNGNSDANWPAICQQFNDXCQKVSG. The helical transmembrane segment at 185–205 threads the bilayer; sequence AVVASFLTVVVLMLLIVLSAF. At 206 to 207 the chain is on the cytoplasmic side; that stretch reads AL.

Belongs to the Casparian strip membrane proteins (CASP) family. As to quaternary structure, homodimer and heterodimers.

The protein localises to the cell membrane. In terms of biological role, regulates membrane-cell wall junctions and localized cell wall deposition. Required for establishment of the Casparian strip membrane domain (CSD) and the subsequent formation of Casparian strips, a cell wall modification of the root endodermis that determines an apoplastic barrier between the intraorganismal apoplasm and the extraorganismal apoplasm and prevents lateral diffusion. The chain is Casparian strip membrane protein 1 from Cynara cardunculus var. scolymus (Globe artichoke).